Consider the following 63-residue polypeptide: Crotasin (63 aa).

An N-terminal signal peptide occupies residues 1–22 (MKILYLLSAFLFLAFLSESGNA). Disulfide bonds link Cys26-Cys56, Cys33-Cys50, and Cys38-Cys57.

As to expression, highly expressed in pancreas, heart, liver, brain and kidney. Expressed to a low extent in the venom gland.

The protein localises to the secreted. This Crotalus durissus terrificus (South American rattlesnake) protein is Crotasin.